The sequence spans 268 residues: Ubiquinone biosynthesis protein COQ4 homolog, mitochondrial (268 aa).

4 residues coordinate Zn(2+): histidine 171, aspartate 172, histidine 175, and glutamate 187.

The protein belongs to the COQ4 family. As to quaternary structure, component of a multi-subunit COQ enzyme complex. Zn(2+) is required as a cofactor.

The protein resides in the mitochondrion inner membrane. The enzyme catalyses a 4-hydroxy-3-methoxy-5-(all-trans-polyprenyl)benzoate + H(+) = a 2-methoxy-6-(all-trans-polyprenyl)phenol + CO2. It participates in cofactor biosynthesis; ubiquinone biosynthesis. Lyase that catalyzes the C1-decarboxylation of 4-hydroxy-3-methoxy-5-(all-trans-polyprenyl)benzoic acid into 2-methoxy-6-(all-trans-polyprenyl)phenol during ubiquinone biosynthesis. This is Ubiquinone biosynthesis protein COQ4 homolog, mitochondrial from Drosophila yakuba (Fruit fly).